The primary structure comprises 334 residues: Tryptophan--tRNA ligase (334 aa).

Residues 11-13 and 19-20 contribute to the ATP site; these read QPS and GN. Residues 12-20 carry the 'HIGH' region motif; sequence PSGELTIGN. Asp-135 contacts L-tryptophan. ATP-binding positions include 147–149, Val-186, and 195–199; these read GED and KMSKS. The 'KMSKS' region motif lies at 195 to 199; the sequence is KMSKS.

This sequence belongs to the class-I aminoacyl-tRNA synthetase family. As to quaternary structure, homodimer.

The protein resides in the cytoplasm. It catalyses the reaction tRNA(Trp) + L-tryptophan + ATP = L-tryptophyl-tRNA(Trp) + AMP + diphosphate + H(+). In terms of biological role, catalyzes the attachment of tryptophan to tRNA(Trp). Amino acylates tRNA(Trp) with both L- and D-tryptophan, although D-tryptophan is a poor substrate. The sequence is that of Tryptophan--tRNA ligase from Escherichia coli (strain K12).